Consider the following 137-residue polypeptide: SPbeta prophage-derived uncharacterized protein YoqU (137 aa).

The protein is SPbeta prophage-derived uncharacterized protein YoqU (yoqU) of Bacillus subtilis (strain 168).